The sequence spans 585 residues: Proline--tRNA ligase (585 aa).

This sequence belongs to the class-II aminoacyl-tRNA synthetase family. ProS type 1 subfamily. As to quaternary structure, homodimer.

The protein localises to the cytoplasm. The enzyme catalyses tRNA(Pro) + L-proline + ATP = L-prolyl-tRNA(Pro) + AMP + diphosphate. Catalyzes the attachment of proline to tRNA(Pro) in a two-step reaction: proline is first activated by ATP to form Pro-AMP and then transferred to the acceptor end of tRNA(Pro). As ProRS can inadvertently accommodate and process non-cognate amino acids such as alanine and cysteine, to avoid such errors it has two additional distinct editing activities against alanine. One activity is designated as 'pretransfer' editing and involves the tRNA(Pro)-independent hydrolysis of activated Ala-AMP. The other activity is designated 'posttransfer' editing and involves deacylation of mischarged Ala-tRNA(Pro). The misacylated Cys-tRNA(Pro) is not edited by ProRS. In Corynebacterium diphtheriae (strain ATCC 700971 / NCTC 13129 / Biotype gravis), this protein is Proline--tRNA ligase.